A 208-amino-acid polypeptide reads, in one-letter code: MASSASKFIKCVTVGDGAVGKTCMLICYTSNKFPTDYIPTVFDNFSVNVVVEGITVNLGLWDTAGQEDYNRLRPLSYRGADVFVLAFSLISRASYENVFKKWIPELQHFAPGVPIVLVGTKMDLREDRHYLSDHPGLSPVTTSQGEELRKHIGATYYIECSSKTQQNVKAVFDAAIKVVIKPAVKQKEKKKKQKPRSGCLSNILCGKN.

15-22 (GDGAVGKT) is a binding site for GTP. An Effector region motif is present at residues 37–45 (YIPTVFDNF). GTP contacts are provided by residues 62–66 (DTAGQ) and 120–123 (TKMD). 2 S-palmitoyl cysteine lipidation sites follow: cysteine 199 and cysteine 205.

It belongs to the small GTPase superfamily. Rho family. As to quaternary structure, interacts with ICR1. Binds to SPK1. In terms of processing, although this sequence has a C-terminal -CXXX, it is palmitoylated at Cys-205, rather than prenylated.

It is found in the membrane. In terms of biological role, acts as a negative regulator of abscisic acid (ABA) responses. In Arabidopsis thaliana (Mouse-ear cress), this protein is Rac-like GTP-binding protein ARAC8 (ARAC8).